The primary structure comprises 120 residues: Large ribosomal subunit protein bL19 (120 aa).

This sequence belongs to the bacterial ribosomal protein bL19 family.

This protein is located at the 30S-50S ribosomal subunit interface and may play a role in the structure and function of the aminoacyl-tRNA binding site. In Geobacillus kaustophilus (strain HTA426), this protein is Large ribosomal subunit protein bL19.